The chain runs to 686 residues: Translation initiation factor IF-2 (686 aa).

A disordered region spans residues 54–105; sequence KPSVADEFEVEEKVVRSKKNSNKKKKKGKGNEDKRQENFAGRQQTQTVETPD. Positions 69 to 81 are enriched in basic residues; the sequence is RSKKNSNKKKKKG. A tr-type G domain is found at 188–357; sequence ERPAVVTIMG…LLISEVEEYK (170 aa). The tract at residues 197–204 is G1; sequence GHVDHGKT. 197–204 serves as a coordination point for GTP; it reads GHVDHGKT. Residues 222–226 form a G2 region; the sequence is GITQH. The interval 243–246 is G3; the sequence is DTPG. Residues 243–247 and 297–300 each bind GTP; these read DTPGH and NKMD. A G4 region spans residues 297 to 300; that stretch reads NKMD. Residues 333–335 are G5; sequence SAI.

Belongs to the TRAFAC class translation factor GTPase superfamily. Classic translation factor GTPase family. IF-2 subfamily.

It is found in the cytoplasm. In terms of biological role, one of the essential components for the initiation of protein synthesis. Protects formylmethionyl-tRNA from spontaneous hydrolysis and promotes its binding to the 30S ribosomal subunits. Also involved in the hydrolysis of GTP during the formation of the 70S ribosomal complex. The protein is Translation initiation factor IF-2 of Bacillus anthracis (strain A0248).